Consider the following 317-residue polypeptide: tRNA dimethylallyltransferase (317 aa).

14-21 (GPTAVGKT) contributes to the ATP binding site. Residue 16-21 (TAVGKT) participates in substrate binding. Positions 39-42 (DSMQ) are interaction with substrate tRNA.

It belongs to the IPP transferase family. Monomer. Mg(2+) is required as a cofactor.

It catalyses the reaction adenosine(37) in tRNA + dimethylallyl diphosphate = N(6)-dimethylallyladenosine(37) in tRNA + diphosphate. In terms of biological role, catalyzes the transfer of a dimethylallyl group onto the adenine at position 37 in tRNAs that read codons beginning with uridine, leading to the formation of N6-(dimethylallyl)adenosine (i(6)A). In Bacillus mycoides (strain KBAB4) (Bacillus weihenstephanensis), this protein is tRNA dimethylallyltransferase.